A 277-amino-acid chain; its full sequence is MSPLLTARAASKSYRTVSLVGRSPAKTVLSEATVTLSEGETVALLGRSGSGKSTLARLLLGLEKPDHGTIAFRGRPLGGFSRAEWRAFRGAVQMVFQDSLGAVNPRHRVGRIIGEPLRHLTTLDDAGRAARRDALLRQVGLTPEDADKLPQQMSGGQLQRVCIARALAPGPRLLVLDEAVSNLDLMLQIQMIDLLKDLQRQTGMAYLFVTHDLRLVERFCQRVIVLDEGKIVEEAPVTGAQRFEHPASRALQRAILPARPAAASVGDDEGGRRSATR.

One can recognise an ABC transporter domain in the interval 14–253 (YRTVSLVGRS…EHPASRALQR (240 aa)). 46-53 (GRSGSGKS) serves as a coordination point for ATP.

The protein belongs to the ABC transporter superfamily. Nickel importer (TC 3.A.1.5.3) family. In terms of assembly, the complex is composed of two ATP-binding proteins (NikD and NikE), two transmembrane proteins (NikB and NikC) and a solute-binding protein (NikA).

The protein resides in the cell inner membrane. The enzyme catalyses Ni(2+)(out) + ATP + H2O = Ni(2+)(in) + ADP + phosphate + H(+). Part of the ABC transporter complex NikABCDE involved in nickel import. Responsible for energy coupling to the transport system. The sequence is that of Nickel import ATP-binding protein NikE from Rhodospirillum rubrum (strain ATCC 11170 / ATH 1.1.1 / DSM 467 / LMG 4362 / NCIMB 8255 / S1).